Here is a 307-residue protein sequence, read N- to C-terminus: MAAICQFTPKDISMEARNMTPFTYFSLPMQKLFLRNQAAVRNKPYAKYFRSEMRVPLSAVRKIQQGPMALEDTLTPSIEDINRLLEPDFVSEESGYALLPGPMAYVQSRKFFPGCTAQMFKWWFIWHPAESERYTLWFPYAHVSNPCVHHQRLCDESLSFEERLYGNTFCASEYVGDRLMHLHIDFQQPASLGLNTDLYREAKIDGSVSALMSLADHPEVPVSLMVHLFKEVPDGMYLTSRYWVGAHPSMARFPGAEKAASLLKENGFGEAELETLAYEFAVHDMCEFNHLASFLPDLYREFGTPAA.

Zn(2+) contacts are provided by histidine 142, glutamate 173, histidine 283, and glutamate 287.

Belongs to the DAPG/phloretin hydrolase family. Zn(2+) serves as cofactor.

The catalysed reaction is 2,4-diacetylphloroglucinol + H2O = 2-acetylphloroglucinol + acetate. Its activity is regulated as follows. Activity is strongly reduced by pyoluteorin, an antifungal compound produced by the bacterium. Functionally, hydrolase that specifically degrades the potent antimicrobial compound 2,4-diacetylphloroglucinol (DAPG) to equimolar amounts of mildly toxic monoacetylphloroglucinol (MAPG) and acetate. Does not degrade other compounds with structures similar to DAPG, such as MAPG and triacetylphloroglucinol, suggesting strict substrate specificity. Degradation of DAPG to MAPG may provide an additional means of fine-tuning levels of this antibiotic or may help avoid accumulation of a metabolite that at high levels may become toxic to the producing bacterium. This chain is 2,4-diacetylphloroglucinol hydrolase, found in Pseudomonas protegens (strain DSM 19095 / LMG 27888 / CFBP 6595 / CHA0).